The following is a 172-amino-acid chain: uncharacterized protein (172 aa).

This is an uncharacterized protein from Macaca mulatta (Rhesus macaque).